The following is a 1074-amino-acid chain: Pleckstrin homology domain-containing family M member 1 (1074 aa).

An RUN domain is found at 40–182; the sequence is TSEDGDANTM…LSFELSYKSA (143 aa). Disordered stretches follow at residues 214 to 244, 272 to 336, and 382 to 454; these read QRKE…RRNR, LQEN…MFQT, and DEKQ…PPQE. Ser218 carries the post-translational modification Phosphoserine. Polar residues-rich tracts occupy residues 313 to 329 and 393 to 404; these read SKAQ…NQEP and PAQSTSDQQPSS. A phosphoserine mark is found at Ser433, Ser436, and Ser491. A disordered region spans residues 506 to 526; that stretch reads GNAQPAPAPAPAPAPAPAPAP. Positions 511–525 are enriched in pro residues; the sequence is APAPAPAPAPAPAPA. One can recognise a PH 1 domain in the interval 551–642; that stretch reads GLMKLGTVAR…WLDRVREALQ (92 aa). Residues 649–655 carry the LIR motif; that stretch reads EDEWVNI. The tract at residues 661–680 is disordered; sequence AEDAPEAPPDSLPPYSTLLP. An interaction with RAB7A region spans residues 672 to 1074; sequence LPPYSTLLPE…RKYQEQNVVS (403 aa). Residues 701-795 form the PH 2 domain; sequence DAIKESLLYL…WRDLVRKVLA (95 aa). Residues 1004-1058 form a Phorbol-ester/DAG-type zinc finger; the sequence is QHVYHCDLCTQRGFICQICHHQDIIFPFEFDTTVRCAECRTVFHQSCQAVVRKGC.

Interacts (via N- and C-terminus) with RAB7A (GTP-bound form). Simultaneously interacts with RAB7A and ARL8B; bringing about clustering and fusion of late endosomes and lysosomes. Interacts (via RUN domain) with ARL8B (GTP-bound form); the interaction is required for PLEKHM1 localization to lysosomes and for ARL8B function in delivery and degradation of endocytic and autophagic cargo in lysosomes. PLEKHM1 and PLEKHM2 compete for interaction with ARL8B. Interacts with ARL8A; the interaction is weaker than with ARL8B. Interacts with VPS41, VPS11, VPS18, VPS33A and VPS39; indicative for an association with the HOPS complex; the interactions with, at least, VPS41, VPS11, VPS18 and VPS33A require ARL8B. Interacts with GABARAP, GABARAPL, GABARAPL2, MAP1LC3A, MAP1LC3B and MAP1LC3C. Interacts with PAFAH1B. Interacts (via N- and C-terminus) with NDEL1. Interacts (via C-terminus) with MAP3K7. Interacts (via N- and C-terminus) with FAM98A. Interacts (via C-terminus) with DEF8; this interaction is weak but increased in a RAB7A-dependent manner. May interact with sialyl-lex-positive protein.

The protein resides in the autolysosome membrane. It localises to the endosome membrane. Its subcellular location is the late endosome membrane. The protein localises to the lysosome membrane. Acts as a multivalent adapter protein that regulates Rab7-dependent and HOPS complex-dependent fusion events in the endolysosomal system and couples autophagic and the endocytic trafficking pathways. Acts as a dual effector of RAB7A and ARL8B that simultaneously binds these GTPases, bringing about clustering and fusion of late endosomes and lysosomes. Required for late stages of endolysosomal maturation, facilitating both endocytosis-mediated degradation of growth factor receptors and autophagosome clearance. Interaction with Arl8b is a crucial factor in the terminal maturation of autophagosomes and to mediate autophagosome-lysosome fusion. Positively regulates lysosome peripheral distribution and ruffled border formation in osteoclasts. May be involved in negative regulation of endocytic transport from early endosome to late endosome/lysosome implicating its association with Rab7. May have a role in sialyl-lex-mediated transduction of apoptotic signals. Involved in bone resorption. The sequence is that of Pleckstrin homology domain-containing family M member 1 from Mus musculus (Mouse).